Here is a 1480-residue protein sequence, read N- to C-terminus: Cystic fibrosis transmembrane conductance regulator (1480 aa).

The Cytoplasmic portion of the chain corresponds to 1 to 77; it reads MQRSPLEKAS…KLINALRRCF (77 aa). Residues 78-98 form a helical membrane-spanning segment; it reads FWRFMFYGIFLYLGEVTKAVQ. The ABC transmembrane type-1 1 domain maps to 81-365; it reads FMFYGIFLYL…WAVQTWYDSL (285 aa). Residues 99 to 122 are Extracellular-facing; that stretch reads PLLLGRIIASYDPDNKEERSIAIY. The chain crosses the membrane as a helical span at residues 123-146; the sequence is LGIGLCLLFIVRTLLLHPAIFGLH. Over 147-195 the chain is Cytoplasmic; the sequence is HIGMQMRIAMFSLIYKKTLKLSSRVLDKISIGQLVSLLSNNLNKFDEGL. Residues 196–216 form a helical membrane-spanning segment; the sequence is ALAHFVWIAPLQVALLMGLIW. The Extracellular segment spans residues 217-222; it reads ELLQAS. Residues 223-243 traverse the membrane as a helical segment; that stretch reads AFCGLGFLIVLALFQAGLGRM. The Cytoplasmic portion of the chain corresponds to 244–298; sequence MMKYRDQRAGKISERLVITSEMIENIQSVKAYCWEEAMEKMIENLRQTELKLTRK. Residues 299–319 traverse the membrane as a helical segment; sequence AAYVRYFNSSAFFFSGFFVVF. The Extracellular portion of the chain corresponds to 320-339; the sequence is LSVLPYALIKGIVLRKIFTT. Residues 340 to 358 traverse the membrane as a helical segment; the sequence is ISFCIVLRMAVTRQFPWAV. The Cytoplasmic portion of the chain corresponds to 359-858; that stretch reads QTWYDSLGAI…YLRYITVHKS (500 aa). ATP contacts are provided by residues Trp401, Ser434, 458 to 465, and Gln493; that span reads GSTGAGKT. The ABC transporter 1 domain maps to 423-646; it reads NGDDSLFFSN…RPDFSSKLMG (224 aa). Residue Cys524 is the site of S-palmitoyl cysteine attachment. Residues Ser549 and Ser660 each carry the phosphoserine modification. Residues 654-831 are disordered R region; the sequence is SAERRNSILT…EEINEEDLKE (178 aa). The residue at position 670 (Ser670) is a Phosphoserine; by PKA. Ser686 carries the post-translational modification Phosphoserine. Lys688 is covalently cross-linked (Glycyl lysine isopeptide (Lys-Gly) (interchain with G-Cter in ubiquitin)). Phosphoserine occurs at positions 700 and 712. The residue at position 717 (Thr717) is a Phosphothreonine. Ser737, Ser753, Ser768, Ser790, Ser795, and Ser813 each carry phosphoserine. A helical transmembrane segment spans residues 859–879; the sequence is LIFVLIWCLVIFLAEVAASLV. The 297-residue stretch at 859 to 1155 folds into the ABC transmembrane type-1 2 domain; the sequence is LIFVLIWCLV…AVNSSIDVDS (297 aa). Residues 880-918 lie on the Extracellular side of the membrane; the sequence is VLWLLGNTPLQDKGNSTHSRNNSYAVIITSTSSYYVFYI. N-linked (GlcNAc...) asparagine glycans are attached at residues Asn894 and Asn900. The discontinuously helical transmembrane segment at 919–939 threads the bilayer; the sequence is YVGVADTLLAMGFFRGLPLVH. The Cytoplasmic portion of the chain corresponds to 940–990; sequence TLITVSKILHHKMLHSVLQAPMSTLNTLKAGGILNRFSKDIAILDDLLPLT. A helical membrane pass occupies residues 991-1011; it reads IFDFIQLLLIVIGAIAVVAVL. Over 1012 to 1013 the chain is Extracellular; it reads QP. A helical transmembrane segment spans residues 1014-1034; sequence YIFVATVPVIVAFIMLRAYFL. The Cytoplasmic portion of the chain corresponds to 1035–1095; sequence QTSQQLKQLE…TANWFLYLST (61 aa). Residues 1096–1116 form a helical membrane-spanning segment; the sequence is LRWFQMRIEMIFVMFFIAVTF. The Extracellular portion of the chain corresponds to 1117-1130; that stretch reads ISILTTGEGEGRIG. The chain crosses the membrane as a helical span at residues 1131–1151; it reads IILTLAMNIMSTLQWAVNSSI. Over 1152–1480 the chain is Cytoplasmic; that stretch reads DVDSLMRSVS…TEEEVQDTRL (329 aa). The 234-residue stretch at 1210–1443 folds into the ABC transporter 2 domain; it reads MTVKDLSAKY…RSLFRQAISP (234 aa). ATP is bound by residues Tyr1219 and 1244 to 1251; that span reads GRTGSGKS. An interaction with GORASP2 region spans residues 1386-1480; sequence RTLKQAFADC…TEEEVQDTRL (95 aa). Cys1395 carries the S-palmitoyl cysteine lipid modification. A phosphoserine mark is found at Ser1444 and Ser1456. The segment at 1451–1480 is disordered; sequence PHRNSSKGKSQPQIAALKEETEEEVQDTRL. Acidic residues predominate over residues 1470 to 1480; sequence ETEEEVQDTRL. The PDZ-binding motif lies at 1478-1480; that stretch reads TRL.

It belongs to the ABC transporter superfamily. ABCC family. CFTR transporter (TC 3.A.1.202) subfamily. As to quaternary structure, monomer; does not require oligomerization for channel activity. May form oligomers in the membrane. Interacts with SLC26A3, SLC26A6 and NHERF1. Interacts with SHANK2. Interacts with MYO6. Interacts (via C-terminus) with GOPC (via PDZ domain); this promotes CFTR internalization and thereby decreases channel activity. Interacts with SLC4A7 through NHERF1. Found in a complex with MYO5B and RAB11A. Interacts with ANO1. Interacts with SLC26A8. Interacts with AHCYL1; the interaction increases CFTR activity. Interacts with CSE1L. The core-glycosylated form interacts with GORASP2 (via PDZ GRASP-type 1 domain) in respone to ER stress. Interacts with MARCHF2; the interaction leads to CFTR ubiqtuitination and degradation. Interacts with ADGRG2. N-glycosylated. In terms of processing, phosphorylated; cAMP treatment promotes phosphorylation and activates the channel. Dephosphorylation decreases the ATPase activity (in vitro). Phosphorylation at PKA sites activates the channel. Phosphorylation at PKC sites enhances the response to phosphorylation by PKA. Phosphorylated by AMPK; this inhibits channel activity. Post-translationally, ubiquitinated, leading to its degradation in the lysosome. Deubiquitination by USP10 in early endosomes enhances its endocytic recycling to the cell membrane. Ubiquitinated by RNF185 during ER stress. Ubiquitinated by MARCHF2.

It is found in the apical cell membrane. The protein resides in the early endosome membrane. Its subcellular location is the cell membrane. It localises to the recycling endosome membrane. The protein localises to the endoplasmic reticulum membrane. It is found in the nucleus. The catalysed reaction is ATP + H2O + closed Cl(-) channel = ADP + phosphate + open Cl(-) channel.. It catalyses the reaction chloride(in) = chloride(out). It carries out the reaction hydrogencarbonate(in) = hydrogencarbonate(out). The enzyme catalyses ATP + H2O = ADP + phosphate + H(+). Functionally, epithelial ion channel that plays an important role in the regulation of epithelial ion and water transport and fluid homeostasis. Mediates the transport of chloride ions across the cell membrane. Possesses an intrinsic ATPase activity and utilizes ATP to gate its channel; the passive flow of anions through the channel is gated by cycles of ATP binding and hydrolysis by the ATP-binding domains. The ion channel is also permeable to HCO(3)(-); selectivity depends on the extracellular chloride concentration. Exerts its function also by modulating the activity of other ion channels and transporters. Contributes to the regulation of the pH and the ion content of the epithelial fluid layer. Modulates the activity of the epithelial sodium channel (ENaC) complex, in part by regulating the cell surface expression of the ENaC complex. May regulate bicarbonate secretion and salvage in epithelial cells by regulating the transporter SLC4A7. Can inhibit the chloride channel activity of ANO1. Plays a role in the chloride and bicarbonate homeostasis during sperm epididymal maturation and capacitation. The sequence is that of Cystic fibrosis transmembrane conductance regulator from Nomascus leucogenys (Northern white-cheeked gibbon).